Consider the following 609-residue polypeptide: Thiamine metabolism regulatory protein THI3 (609 aa).

Residues 578 to 598 (SKQVQEENENSSAVNTPTPEF) are disordered.

It belongs to the TPP enzyme family. Mg(2+) is required as a cofactor. Requires thiamine diphosphate as cofactor.

The protein resides in the nucleus. It carries out the reaction 4-methyl-2-oxopentanoate + H(+) = 3-methylbutanal + CO2. It catalyses the reaction (S)-3-methyl-2-oxopentanoate + H(+) = 2-methylbutanal + CO2. The protein operates within amino-acid degradation; Ehrlich pathway. One of five 2-oxo acid decarboxylases (PDC1, PDC5, PDC6, ARO10, and THI3) involved in amino acid catabolism. The enzyme catalyzes the decarboxylation of amino acids, which, in a first step, have been transaminated to the corresponding 2-oxo acids (alpha-keto-acids). In a third step, the resulting aldehydes are reduced to alcohols, collectively referred to as fusel oils or alcohols. Its preferred substrates are the transaminated amino acids derived from leucine (4-methyl-2-oxopentanoate, also alpha-keto-isocaproate) and isoleucine ((3S)-3-methyl-2-oxopentanoate, also alpha-keto-beta-methylvalerate), whereas transaminated valine, transaminated aromatic amino acids, and pyruvate are no substrates. In analogy to the pyruvate decarboxylases the enzyme may in a side-reaction catalyze condensation (or carboligation) reactions leading to the formation of 2-hydroxy ketone, collectively called acyloins. The enzyme is also positively regulating the thiamine metabolism by a molecular mechanism that may involve thiamine concentration sensing and signal transmission. This chain is Thiamine metabolism regulatory protein THI3 (THI3), found in Saccharomyces cerevisiae (strain ATCC 204508 / S288c) (Baker's yeast).